We begin with the raw amino-acid sequence, 426 residues long: Serine hydroxymethyltransferase (426 aa).

(6S)-5,6,7,8-tetrahydrofolate contacts are provided by residues L115 and 119–121; that span reads GHI. Residue K225 is modified to N6-(pyridoxal phosphate)lysine.

The protein belongs to the SHMT family. As to quaternary structure, homodimer. Pyridoxal 5'-phosphate is required as a cofactor.

The protein resides in the cytoplasm. The protein operates within amino-acid biosynthesis; glycine biosynthesis; glycine from L-serine: step 1/1. Its function is as follows. Catalyzes the reversible interconversion of serine and glycine with a modified folate serving as the one-carbon carrier. Also exhibits a pteridine-independent aldolase activity toward beta-hydroxyamino acids, producing glycine and aldehydes, via a retro-aldol mechanism. The protein is Serine hydroxymethyltransferase of Thermoplasma volcanium (strain ATCC 51530 / DSM 4299 / JCM 9571 / NBRC 15438 / GSS1).